The chain runs to 270 residues: Transmembrane protein 176B (270 aa).

4 helical membrane-spanning segments follow: residues 65-85 (LALG…GVCL), 95-115 (ASGC…GAIV), 127-147 (ISSL…VLCV), and 209-229 (LFLA…GVGL). Ser-236, Ser-245, Ser-254, and Ser-258 each carry phosphoserine. The segment at 237–270 (SQPLNEEGSEKRLLGENSVPPSPSREQTSTAIVL) is disordered. Polar residues predominate over residues 260 to 270 (SREQTSTAIVL).

The protein belongs to the TMEM176 family. As to expression, expressed in lung and dermal fibroblasts.

The protein resides in the nucleus membrane. Its function is as follows. May play a role in the process of maturation of dendritic cells. Required for the development of cerebellar granule cells. The polypeptide is Transmembrane protein 176B (TMEM176B) (Homo sapiens (Human)).